Here is a 423-residue protein sequence, read N- to C-terminus: TPR repeat-containing protein YpiA (423 aa).

9 TPR repeats span residues 33-66, 67-100, 135-168, 171-204, 238-271, 272-305, 306-339, 340-373, and 374-407; these read DEDK…YPNE, TELT…DPSY, PVID…QSEI, VNVH…NPDP, TSLY…DEYN, KELF…DPGF, VEAL…GEED, PKYN…YRED, and RDFL…DGAN.

Interacts with the RNA polymerase core.

The protein is TPR repeat-containing protein YpiA (ypiA) of Bacillus subtilis (strain 168).